The chain runs to 211 residues: Glial cell line-derived neurotrophic factor (211 aa).

Positions 1 to 19 are cleaved as a signal peptide; it reads MKLWDVVAVCLVLLHTASA. Positions 20 to 75 are excised as a propeptide; it reads FPLPAGKRLLEAPAEDHSLGHRRVPFALTSDSNMPEDYPDQFDDVMDFIQATIKRL. Residues 76–113 are disordered; sequence KRSPDKQAAALPRRERNRQAAAASPENSRGKGRRGQRG. Intrachain disulfides connect Cys118-Cys179, Cys145-Cys208, and Cys149-Cys210. 2 N-linked (GlcNAc...) asparagine glycosylation sites follow: Asn126 and Asn162.

It belongs to the TGF-beta family. GDNF subfamily. In terms of assembly, homodimer; disulfide-linked. Interacts with GFRA1 coreceptor and RET: forms a 2:2:2 ternary complex composed of GDNF ligand, GFRA1 and RET receptor. Interacts (via propeptide) with SORL1 (via N-terminal ectodomain); this interaction affects GDNF-regulated, but not constitutive secretion. Also interacts with SORL1 in complex with GFRA1; this interaction leads to GDNF endocytosis and lysosomal degradation. Expressed in both the central nervous system (CNS) and in non-CNS tissues, including the kidney, lung, bone, heart, liver, spleen, sciatic nerve and blood. Expressed in brain (at protein level). Localizes at the proximal ligature of the hypoglossal nerve.

The protein resides in the secreted. Functionally, neurotrophic factor that enhances survival and morphological differentiation of dopaminergic neurons and increases their high-affinity dopamine uptake. Acts by binding to its coreceptor, GFRA1, leading to autophosphorylation and activation of the RET receptor. May also modulate local neuronal effects in distal regions of the motor neuron. Involved in the development of the neural crest. The protein is Glial cell line-derived neurotrophic factor (Gdnf) of Rattus norvegicus (Rat).